Reading from the N-terminus, the 100-residue chain is Small ribosomal subunit protein uS14c (100 aa).

Belongs to the universal ribosomal protein uS14 family. Part of the 30S ribosomal subunit.

It is found in the plastid. The protein localises to the chloroplast. Functionally, binds 16S rRNA, required for the assembly of 30S particles. This chain is Small ribosomal subunit protein uS14c, found in Chara vulgaris (Common stonewort).